We begin with the raw amino-acid sequence, 228 residues long: uncharacterized protein (228 aa).

An N-terminal signal peptide occupies residues 1–19; that stretch reads MYRYTWLLWWITILLRIQQ. 5 N-linked (GlcNAc...) asparagine; by host glycosylation sites follow: asparagine 41, asparagine 93, asparagine 100, asparagine 128, and asparagine 164. The helical transmembrane segment at 189 to 209 threads the bilayer; that stretch reads MWIIPLVIVTTIIVLICFKFP.

Belongs to the HHV-5 UL9 family.

The protein localises to the host membrane. This is an uncharacterized protein from Homo sapiens (Human).